Consider the following 301-residue polypeptide: F-actin-capping protein subunit beta (301 aa).

At serine 31 the chain carries Phosphoserine. Lysine 264 carries the N6-acetyllysine modification.

This sequence belongs to the F-actin-capping protein beta subunit family. Component of the F-actin capping complex, composed of a heterodimer of an alpha and a beta subunit. Subunit of dynactin, a multiprotein complex part of a tripartite complex with dynein and a adapter, such as BICDL1, BICD2 or HOOK3. The dynactin complex is built around ACTR1A/ACTB filament and consists of an actin-related filament composed of a shoulder domain, a pointed end and a barbed end. Its length is defined by its flexible shoulder domain. The soulder is composed of 2 DCTN1 subunits, 4 DCTN2 and 2 DCTN3. The 4 DCNT2 (via N-terminus) bind the ACTR1A filament and act as molecular rulers to determine the length. The pointed end is important for binding dynein-dynactin cargo adapters. Consists of 4 subunits: ACTR10, DCNT4, DCTN5 and DCTN6. The barbed end is composed of a CAPZA1:CAPZB heterodimers, which binds ACTR1A/ACTB filament and dynactin and stabilizes dynactin. Interacts with ARHGAP17. Interaction with RCSD1/CAPZIP. Component of the WASH complex, composed of F-actin-capping protein subunit alpha (CAPZA1, CAPZA2 or CAPZA3), F-actin-capping protein subunit beta (CAPZB), WASH (WASHC1, WASH2P, WASH3P, WASH4P, WASH5P or WASH6P), WASHC2 (WASHC2A or WASHC2C), WASHC3, WASHC4 and WASHC5. Interacts with ACTG1. Directly interacts with CRACD; this interaction decreases binding to actin. As to expression, the isoform beta-3 is predominantly expressed in the testis. It is only detected in total sperm, sperm heads and the calyx fraction, but not in sperm tails or any supernatant fraction. Weaker expression also found in brain.

It localises to the cytoplasm. The protein resides in the cytoskeleton. Its subcellular location is the perinuclear theca. It is found in the calyx. F-actin-capping proteins bind in a Ca(2+)-independent manner to the fast growing ends of actin filaments (barbed end) thereby blocking the exchange of subunits at these ends. Unlike other capping proteins (such as gelsolin and severin), these proteins do not sever actin filaments. Plays a role in the regulation of cell morphology and cytoskeletal organization. Forms, with CAPZB, the barbed end of the fast growing ends of actin filaments in the dynactin complex and stabilizes dynactin structure. The dynactin multiprotein complex activates the molecular motor dynein for ultra-processive transport along microtubules. This chain is F-actin-capping protein subunit beta (CAPZB), found in Bos taurus (Bovine).